Consider the following 505-residue polypeptide: Glycerol kinase (505 aa).

ADP is bound at residue T14. Residues T14, T15, and S16 each coordinate ATP. T14 serves as a coordination point for sn-glycerol 3-phosphate. Position 18 (R18) interacts with ADP. R84, E85, Y136, and D246 together coordinate sn-glycerol 3-phosphate. R84, E85, Y136, D246, and Q247 together coordinate glycerol. Positions 268 and 311 each coordinate ADP. ATP contacts are provided by T268, G311, Q315, and G412. ADP-binding residues include G412 and N416.

This sequence belongs to the FGGY kinase family.

It carries out the reaction glycerol + ATP = sn-glycerol 3-phosphate + ADP + H(+). Its pathway is polyol metabolism; glycerol degradation via glycerol kinase pathway; sn-glycerol 3-phosphate from glycerol: step 1/1. With respect to regulation, inhibited by fructose 1,6-bisphosphate (FBP). In terms of biological role, key enzyme in the regulation of glycerol uptake and metabolism. Catalyzes the phosphorylation of glycerol to yield sn-glycerol 3-phosphate. The sequence is that of Glycerol kinase from Vibrio vulnificus (strain CMCP6).